Reading from the N-terminus, the 276-residue chain is Probable endonuclease LCL3 (276 aa).

Residues 17-37 (FNVVILSIFFSGSFIGAWAFF) traverse the membrane as a helical segment. The TNase-like domain occupies 58–263 (RWLFGKVTAV…KARRRGIWSQ (206 aa)). Residue Arg-154 is part of the active site. A Ca(2+)-binding site is contributed by Asp-159. Active-site residues include Glu-162 and Arg-202.

This sequence belongs to the LCL3 family.

Its subcellular location is the mitochondrion. The protein resides in the membrane. The chain is Probable endonuclease LCL3 (LCL3) from Zygosaccharomyces rouxii (strain ATCC 2623 / CBS 732 / NBRC 1130 / NCYC 568 / NRRL Y-229).